A 727-amino-acid chain; its full sequence is AN1-type zinc finger protein 4 (727 aa).

Residues Met-28–Gly-103 enclose the Ubiquitin-like domain. Disordered regions lie at residues His-187–Asn-217 and Lys-238–Ser-264. Basic residues predominate over residues Lys-238–Pro-248. The segment at Lys-661–Gly-708 adopts an AN1-type zinc-finger fold. Positions 667, 670, 682, 684, 689, 692, 698, and 700 each coordinate Zn(2+).

In Homo sapiens (Human), this protein is AN1-type zinc finger protein 4 (ZFAND4).